The sequence spans 348 residues: Dihydroorotase (348 aa).

Zn(2+) contacts are provided by H13 and H15. Substrate-binding positions include 15-17 (HLR) and N41. Zn(2+)-binding residues include K99, H136, and H174. K99 is modified (N6-carboxylysine). H136 is a binding site for substrate. Residue L219 coordinates substrate. Zn(2+) is bound at residue D247. The active site involves D247. The substrate site is built by H251 and A263.

The protein belongs to the metallo-dependent hydrolases superfamily. DHOase family. Class II DHOase subfamily. In terms of assembly, homodimer. It depends on Zn(2+) as a cofactor.

The catalysed reaction is (S)-dihydroorotate + H2O = N-carbamoyl-L-aspartate + H(+). It participates in pyrimidine metabolism; UMP biosynthesis via de novo pathway; (S)-dihydroorotate from bicarbonate: step 3/3. Catalyzes the reversible cyclization of carbamoyl aspartate to dihydroorotate. In Rhizobium johnstonii (strain DSM 114642 / LMG 32736 / 3841) (Rhizobium leguminosarum bv. viciae), this protein is Dihydroorotase.